The chain runs to 139 residues: Small ribosomal subunit protein uS12 (139 aa).

Positions 1–21 (MSTVSQLIKKRRSSKTSKTKA) are disordered. Over residues 8–18 (IKKRRSSKTSK) the composition is skewed to basic residues. Aspartate 102 is modified (3-methylthioaspartic acid).

This sequence belongs to the universal ribosomal protein uS12 family. In terms of assembly, part of the 30S ribosomal subunit. Contacts proteins S8 and S17. May interact with IF1 in the 30S initiation complex.

Functionally, with S4 and S5 plays an important role in translational accuracy. In terms of biological role, interacts with and stabilizes bases of the 16S rRNA that are involved in tRNA selection in the A site and with the mRNA backbone. Located at the interface of the 30S and 50S subunits, it traverses the body of the 30S subunit contacting proteins on the other side and probably holding the rRNA structure together. The combined cluster of proteins S8, S12 and S17 appears to hold together the shoulder and platform of the 30S subunit. The sequence is that of Small ribosomal subunit protein uS12 from Aster yellows witches'-broom phytoplasma (strain AYWB).